The primary structure comprises 322 residues: Gluconeogenesis factor (322 aa).

This sequence belongs to the gluconeogenesis factor family.

The protein localises to the cytoplasm. Functionally, required for morphogenesis under gluconeogenic growth conditions. The sequence is that of Gluconeogenesis factor from Listeria innocua serovar 6a (strain ATCC BAA-680 / CLIP 11262).